Here is a 761-residue protein sequence, read N- to C-terminus: Cyclin-F (761 aa).

Positions 19-27 (RRRIKRRPR) match the Nuclear localization signal 1 motif. Residues 28 to 75 (VLTLLSLPEDVLLYVLECLPAVDILSMREVHPHLRSLVDSHSSVWARA) enclose the F-box domain. The 112-residue stretch at 300–411 (NKSSIFTTQK…EIISALEGKI (112 aa)) folds into the Cyclin N-terminal domain. 2 consecutive short sequence motifs (d box) follow at residues 316 to 319 (RYIL) and 355 to 358 (RAKL). Disordered stretches follow at residues 575 to 594 (NKTK…SFVT) and 677 to 761 (AENG…SDEL). Positions 580–590 (RREESIQEDRG) are enriched in basic and acidic residues. A PEST region spans residues 589–745 (RGSFVTTPTA…LLKASRRQVK (157 aa)). Residues 691–718 (SSGYSSVSSGGSPTSSSSPGLPFTPTPG) show a composition bias toward low complexity. Positions 739–749 (ASRRQVKRKNQ) are enriched in basic residues.

Belongs to the cyclin family. Cyclin AB subfamily. In terms of assembly, component of the SCF(CCNF) complex.

It localises to the nucleus. The protein localises to the cytoplasm. The protein resides in the perinuclear region. It is found in the cytoskeleton. Its subcellular location is the microtubule organizing center. It localises to the centrosome. The protein localises to the centriole. Its function is as follows. Substrate recognition component of the SCF(CCNF) E3 ubiquitin-protein ligase complex which mediates the ubiquitination and subsequent proteasomal degradation of target proteins. The SCF(CCNF) E3 ubiquitin-protein ligase complex is an integral component of the ubiquitin proteasome system (UPS) and links proteasome degradation to the cell cycle. Mediates the substrate recognition and the proteasomal degradation of various target proteins during G2 phase involved in the regulation of cell cycle progression and in the maintenance of genome stability. This chain is Cyclin-F (ccnf), found in Xenopus laevis (African clawed frog).